We begin with the raw amino-acid sequence, 689 residues long: Acyl-coenzyme A oxidase 1 (689 aa).

FAD contacts are provided by threonine 149 and glycine 188. Glutamate 444 functions as the Proton acceptor in the catalytic mechanism.

This sequence belongs to the acyl-CoA oxidase family. As to quaternary structure, heteropentamer composed of five different subunits. The cofactor is FAD.

The protein localises to the peroxisome. It catalyses the reaction a 2,3-saturated acyl-CoA + O2 = a (2E)-enoyl-CoA + H2O2. It functions in the pathway lipid metabolism; peroxisomal fatty acid beta-oxidation. This Yarrowia lipolytica (strain CLIB 122 / E 150) (Yeast) protein is Acyl-coenzyme A oxidase 1 (POX1).